A 343-amino-acid polypeptide reads, in one-letter code: Heat-inducible transcription repressor HrcA (343 aa).

The protein belongs to the HrcA family.

Functionally, negative regulator of class I heat shock genes (grpE-dnaK-dnaJ and groELS operons). Prevents heat-shock induction of these operons. The chain is Heat-inducible transcription repressor HrcA from Mycobacterium marinum (strain ATCC BAA-535 / M).